Consider the following 422-residue polypeptide: Beta-1,3-galactosyltransferase 2 (422 aa).

Residues 1–24 (MLQWRRRHCCFAKMTWNAKRSLFR) lie on the Cytoplasmic side of the membrane. The helical; Signal-anchor for type II membrane protein transmembrane segment at 25–45 (THLIGVLSLVFLFAMFLFFNH) threads the bilayer. Residues 46-422 (HDWLPGRAGF…AGRYRHRKLH (377 aa)) lie on the Lumenal side of the membrane. Asn75, Asn100, Asn119, Asn176, and Asn226 each carry an N-linked (GlcNAc...) asparagine glycan. The disordered stretch occupies residues 90 to 110 (TLRPQTATNSNNTDLSPQGVT).

The protein belongs to the glycosyltransferase 31 family. It depends on Mn(2+) as a cofactor. As to expression, detected in heart and brain.

It is found in the golgi apparatus membrane. The catalysed reaction is an N-acetyl-beta-D-glucosaminyl derivative + UDP-alpha-D-galactose = a beta-D-galactosyl-(1-&gt;3)-N-acetyl-beta-D-glucosaminyl derivative + UDP + H(+). It catalyses the reaction a beta-D-GlcNAc-(1-&gt;3)-beta-D-Gal-(1-&gt;4)-beta-D-Glc-(1&lt;-&gt;1)-Cer(d18:1(4E)) + UDP-alpha-D-galactose = a beta-D-Gal-(1-&gt;3)-beta-D-GlcNAc-(1-&gt;3)-beta-D-Gal-(1-&gt;4)-beta-D-Glc-(1&lt;-&gt;1')-Cer(d18:1(4E)) + UDP + H(+). It carries out the reaction a neolactoside IV(3)-beta-GlcNAc-nLc4Cer(d18:1(4E)) + UDP-alpha-D-galactose = a neolactoside IV(3)-beta-[Gal-beta-(1-&gt;3)-GlcNAc]-nLc4Cer(d18:1(4E)) + UDP + H(+). It functions in the pathway protein modification; protein glycosylation. In terms of biological role, beta-1,3-galactosyltransferase that transfers galactose from UDP-galactose to substrates with a terminal beta-N-acetylglucosamine (beta-GlcNAc) residue. Can also utilize substrates with a terminal galactose residue, albeit with lower efficiency. Involved in the biosynthesis of the carbohydrate moieties of glycolipids and glycoproteins. Inactive towards substrates with terminal alpha-N-acetylglucosamine (alpha-GlcNAc) or alpha-N-acetylgalactosamine (alpha-GalNAc) residues. The sequence is that of Beta-1,3-galactosyltransferase 2 from Homo sapiens (Human).